Here is a 354-residue protein sequence, read N- to C-terminus: S-adenosylmethionine:tRNA ribosyltransferase-isomerase (354 aa).

Belongs to the QueA family. Monomer.

The protein resides in the cytoplasm. It carries out the reaction 7-aminomethyl-7-carbaguanosine(34) in tRNA + S-adenosyl-L-methionine = epoxyqueuosine(34) in tRNA + adenine + L-methionine + 2 H(+). It participates in tRNA modification; tRNA-queuosine biosynthesis. Functionally, transfers and isomerizes the ribose moiety from AdoMet to the 7-aminomethyl group of 7-deazaguanine (preQ1-tRNA) to give epoxyqueuosine (oQ-tRNA). The protein is S-adenosylmethionine:tRNA ribosyltransferase-isomerase of Salmonella gallinarum (strain 287/91 / NCTC 13346).